A 577-amino-acid polypeptide reads, in one-letter code: Cell pattern formation-associated protein stuA (577 aa).

Residues 1-41 form a disordered region; it reads MNQPQPYMDQHAPAPPPASNMTQYSNYGAPQPLQPATHGYG. Over residues 19–28 the composition is skewed to polar residues; sequence SNMTQYSNYG. The HTH APSES-type domain maps to 111 to 217; sequence RVTATLWEDE…HNIGALLYHP (107 aa). The H-T-H motif DNA-binding region spans 145–166; it reads GTKLLNVAGMTRGRRDGILKSE. Disordered regions lie at residues 228 to 487 and 518 to 577; these read ATMA…QLPS and QYPA…AVRR. 2 stretches are compositionally biased toward polar residues: residues 238–251 and 319–333; these read SQEY…TQAP and AVNS…SQGM. Residues 334 to 350 show a composition bias toward low complexity; it reads PQYQTSQPPYTQSYSTP. Residues 351 to 364 show a composition bias toward polar residues; sequence GSYSQPQYTHQQPG. Residues 390-399 are compositionally biased toward basic and acidic residues; it reads AENDHPDHKV. A compositionally biased stretch (low complexity) spans 465-479; sequence TPRTTNPYTGYNNTP. Residues 526–552 are nuclear localization domain; sequence KRGREDDDQVDPYGRPSSALGEHKRQR.

The protein belongs to the EFG1/PHD1/stuA family.

Its subcellular location is the nucleus. In terms of biological role, transcription factor that regulates asexual reproduction. Binds the StuA-response elements (StRE) with the consensus sequence 5'-(A/T)CGCG(T/A)N(A/C)-3' at the promoters of target genes. In Dothistroma septosporum (strain NZE10 / CBS 128990) (Red band needle blight fungus), this protein is Cell pattern formation-associated protein stuA.